An 87-amino-acid chain; its full sequence is MANIKSKKKRIKTNEKARQRNKAIRSRLHTENRKFRELVAAGDKAGAEAQLRLASREYDKAVTKGTLHRNNAANKKSAMAKLFNSMD.

Over residues 1-11 the composition is skewed to basic residues; it reads MANIKSKKKRI. The disordered stretch occupies residues 1-25; the sequence is MANIKSKKKRIKTNEKARQRNKAIR.

The protein belongs to the bacterial ribosomal protein bS20 family.

Its function is as follows. Binds directly to 16S ribosomal RNA. The polypeptide is Small ribosomal subunit protein bS20 (Corynebacterium kroppenstedtii (strain DSM 44385 / JCM 11950 / CIP 105744 / CCUG 35717)).